The sequence spans 172 residues: Protein/nucleic acid deglycase 2 (172 aa).

A PfpI endopeptidase domain is found at 3 to 171 (KKIAVLITDE…FNREALRLLG (169 aa)). The active-site Nucleophile is the Cys-104.

The protein belongs to the peptidase C56 family. As to quaternary structure, exists in monomeric, trimeric, and hexameric forms.

It localises to the cytoplasm. The catalysed reaction is N(omega)-(1-hydroxy-2-oxopropyl)-L-arginyl-[protein] + H2O = lactate + L-arginyl-[protein] + H(+). The enzyme catalyses N(6)-(1-hydroxy-2-oxopropyl)-L-lysyl-[protein] + H2O = lactate + L-lysyl-[protein] + H(+). It catalyses the reaction S-(1-hydroxy-2-oxopropyl)-L-cysteinyl-[protein] + H2O = lactate + L-cysteinyl-[protein] + H(+). It carries out the reaction N(omega)-(1-hydroxy-2-oxoethyl)-L-arginyl-[protein] + H2O = L-arginyl-[protein] + glycolate + H(+). The catalysed reaction is N(6)-(1-hydroxy-2-oxoethyl)-L-lysyl-[protein] + H2O = glycolate + L-lysyl-[protein] + H(+). The enzyme catalyses S-(1-hydroxy-2-oxoethyl)-L-cysteinyl-[protein] + H2O = glycolate + L-cysteinyl-[protein] + H(+). It catalyses the reaction N(2)-(1-hydroxy-2-oxopropyl)-dGTP + H2O = lactate + dGTP + H(+). It carries out the reaction N(2)-(1-hydroxy-2-oxopropyl)-GTP + H2O = lactate + GTP + H(+). The catalysed reaction is N(2)-(1-hydroxy-2-oxopropyl)-GDP + H2O = lactate + GDP + H(+). The enzyme catalyses N(2)-(1-hydroxy-2-oxopropyl)-GMP + H2O = lactate + GMP + H(+). It catalyses the reaction N(2)-(1-hydroxy-2-oxoethyl)-dGTP + H2O = dGTP + glycolate + H(+). It carries out the reaction N(2)-(1-hydroxy-2-oxoethyl)-GTP + H2O = glycolate + GTP + H(+). The catalysed reaction is N(2)-(1-hydroxy-2-oxoethyl)-GDP + H2O = glycolate + GDP + H(+). The enzyme catalyses N(2)-(1-hydroxy-2-oxoethyl)-GMP + H2O = glycolate + GMP + H(+). It catalyses the reaction an N(2)-(1-hydroxy-2-oxopropyl)-guanosine in RNA + H2O = a guanosine in RNA + lactate + H(+). It carries out the reaction an N(2)-(1-hydroxy-2-oxopropyl)-2'-deoxyguanosine in DNA + H2O = a 2'-deoxyguanosine in DNA + lactate + H(+). The catalysed reaction is an N(2)-(1-hydroxy-2-oxoethyl)-guanosine in RNA + H2O = a guanosine in RNA + glycolate + H(+). The enzyme catalyses an N(2)-(1-hydroxy-2-oxoethyl)-2'-deoxyguanosine in DNA + H2O = a 2'-deoxyguanosine in DNA + glycolate + H(+). Glyoxalase activity is inhibited by zinc ions at pH 7.0. Functionally, protein and nucleotide deglycase that catalyzes the deglycation of the Maillard adducts formed between amino groups of proteins or nucleotides and reactive carbonyl groups of glyoxals. Thus, functions as a protein deglycase that repairs methylglyoxal- and glyoxal-glycated proteins, and releases repaired proteins and lactate or glycolate, respectively. Deglycates cysteine, arginine and lysine residues in proteins, and thus reactivates these proteins by reversing glycation by glyoxals. Is able to repair glycated serum albumin, collagen, glyceraldehyde-3-phosphate dehydrogenase, and fructose biphosphate aldolase. Acts on early glycation intermediates (hemithioacetals and aminocarbinols), preventing the formation of advanced glycation endproducts (AGE) that cause irreversible damage. Also functions as a nucleotide deglycase able to repair glycated guanine in the free nucleotide pool (GTP, GDP, GMP, dGTP) and in DNA and RNA. Is thus involved in a major nucleotide repair system named guanine glycation repair (GG repair), dedicated to reversing methylglyoxal and glyoxal damage via nucleotide sanitization and direct nucleic acid repair. In vitro, prevents acrylamide formation in asparagine/glyoxal and asparagine/sugar mixtures at 55 degrees Celsius, likely by degrading asparagine/glyoxal Maillard adducts formed at high temperatures. Also displays an apparent glyoxalase activity that in fact reflects its deglycase activity. Is a general stress protein; is required for the protection of bacterial cells against many environmental stresses, including oxidative, thermal, osmotic, UV, and pH stresses. And plays an important role in protection against electrophile/carbonyl stress. This chain is Protein/nucleic acid deglycase 2 (yhbO), found in Escherichia coli (strain K12).